The sequence spans 628 residues: tRNA(Thr) (cytosine(32)-N(3))-methyltransferase (628 aa).

Basic and acidic residues predominate over residues 1–18; sequence MGVADLIKKFESISKEEG. Disordered stretches follow at residues 1–106, 124–269, and 302–331; these read MGVA…GENA, AEVL…VNDL, and NIAHEGRGDNTGDQNAVEKSDFEKSDTEGS. Over residues 22 to 31 the composition is skewed to polar residues; sequence VDTNSSSKPL. Over residues 32–42 the composition is skewed to basic and acidic residues; sequence KSNDETKELHQ. The span at 53-62 shows a compositional bias: acidic residues; sequence DVNEEFENEP. Ser-93 carries the phosphoserine modification. The segment covering 132-146 has biased composition (acidic residues); that stretch reads EESDAIQEGVAEETE. Thr-150 carries the post-translational modification Phosphothreonine. Acidic residues predominate over residues 173–186; it reads PAEEYSQSEEDADI. Over residues 196-207 the composition is skewed to polar residues; it reads NAENASQQANDG. A compositionally biased stretch (basic residues) spans 215-230; it reads KNKKKKNKKKNKKKRN. Polar residues predominate over residues 231 to 240; the sequence is GNVNTNANVD. A phosphoserine mark is found at Ser-321 and Ser-326. Position 347 is a phosphothreonine (Thr-347). Positions 399, 403, 441, 466, 492, 493, and 515 each coordinate S-adenosyl-L-methionine.

Belongs to the methyltransferase superfamily. METL family. Interacts with SES1.

The protein localises to the cytoplasm. The protein resides in the cytoskeleton. It catalyses the reaction cytidine(32) in tRNA(Thr) + S-adenosyl-L-methionine = N(3)-methylcytidine(32) in tRNA(Thr) + S-adenosyl-L-homocysteine + H(+). The enzyme catalyses cytidine(32) in tRNA(Ser) + S-adenosyl-L-methionine = N(3)-methylcytidine(32) in tRNA(Ser) + S-adenosyl-L-homocysteine + H(+). S-adenosyl-L-methionine-dependent methyltransferase that mediates N(3)-methylcytidine modification of residue 32 of the tRNA anticodon loop of tRNA(Thr) and tRNA(Ser). N(3)-methylcytidine methylation of tRNA(Thr) requires the N6-threonylcarbamoylation of tRNA (t6A37) by the EKC/KEOPS complex as prerequisite. N(3)-methylcytidine methylation of tRNA(Ser) requires the formation of N(6)-dimethylallyladenosine(37) (i6A37) by MOD5 as prerequisite. Methylation of tRNA(Ser) is also stimulated by SES1. Binds F-actin and shows weak F-actin cross-linking activity. The chain is tRNA(Thr) (cytosine(32)-N(3))-methyltransferase (ABP140) from Saccharomyces cerevisiae (strain ATCC 204508 / S288c) (Baker's yeast).